Consider the following 90-residue polypeptide: Small ribosomal subunit protein bS20 (90 aa).

The tract at residues 1–29 is disordered; sequence MANTASAEKRNRQAQKRRARNVQVRTGVK.

This sequence belongs to the bacterial ribosomal protein bS20 family.

In terms of biological role, binds directly to 16S ribosomal RNA. The protein is Small ribosomal subunit protein bS20 of Anaeromyxobacter sp. (strain Fw109-5).